The sequence spans 103 residues: Small ribosomal subunit protein uS10 (103 aa).

The protein belongs to the universal ribosomal protein uS10 family. In terms of assembly, part of the 30S ribosomal subunit.

In terms of biological role, involved in the binding of tRNA to the ribosomes. The sequence is that of Small ribosomal subunit protein uS10 from Chlorobaculum parvum (strain DSM 263 / NCIMB 8327) (Chlorobium vibrioforme subsp. thiosulfatophilum).